Here is a 423-residue protein sequence, read N- to C-terminus: Probable sucrose-phosphatase 1 (423 aa).

This sequence belongs to the sucrose phosphatase family. Homodimer. Mg(2+) is required as a cofactor.

It carries out the reaction sucrose 6(F)-phosphate + H2O = sucrose + phosphate. The protein operates within glycan biosynthesis; sucrose biosynthesis; sucrose from D-fructose 6-phosphate and UDP-alpha-D-glucose: step 2/2. Catalyzes the final step of sucrose synthesis. The polypeptide is Probable sucrose-phosphatase 1 (SPP1) (Arabidopsis thaliana (Mouse-ear cress)).